Here is a 485-residue protein sequence, read N- to C-terminus: Trigger factor (485 aa).

The PPIase FKBP-type domain occupies 171–256 (GDRVVIDFVG…VKAVKAPGEA (86 aa)). The disordered stretch occupies residues 443 to 485 (FADDEDEAAEAAAPASEAGASKGVISEGVISEGSAPSHETGAA). A compositionally biased stretch (low complexity) spans 452–462 (EAAAPASEAGA).

It belongs to the FKBP-type PPIase family. Tig subfamily.

It is found in the cytoplasm. It carries out the reaction [protein]-peptidylproline (omega=180) = [protein]-peptidylproline (omega=0). Involved in protein export. Acts as a chaperone by maintaining the newly synthesized protein in an open conformation. Functions as a peptidyl-prolyl cis-trans isomerase. This is Trigger factor from Methylobacterium sp. (strain 4-46).